The chain runs to 397 residues: Bifunctional enzyme IspD/IspF (397 aa).

The 2-C-methyl-D-erythritol 4-phosphate cytidylyltransferase stretch occupies residues 1-236; that stretch reads MSIAAIILAA…LKGMQIFPDI (236 aa). The tract at residues 237 to 397 is 2-C-methyl-D-erythritol 2,4-cyclodiphosphate synthase; that stretch reads RTGNGYDVHS…TVIYPGEIPK (161 aa). The a divalent metal cation site is built by aspartate 243 and histidine 245. 4-CDP-2-C-methyl-D-erythritol 2-phosphate-binding positions include 243–245 and 269–270; these read DVH and HS. Histidine 277 lines the a divalent metal cation pocket. 4-CDP-2-C-methyl-D-erythritol 2-phosphate contacts are provided by residues 291 to 293, 367 to 370, phenylalanine 374, and arginine 377; these read DIG and TTNE.

This sequence in the N-terminal section; belongs to the IspD/TarI cytidylyltransferase family. IspD subfamily. The protein in the C-terminal section; belongs to the IspF family. A divalent metal cation serves as cofactor.

It catalyses the reaction 2-C-methyl-D-erythritol 4-phosphate + CTP + H(+) = 4-CDP-2-C-methyl-D-erythritol + diphosphate. The catalysed reaction is 4-CDP-2-C-methyl-D-erythritol 2-phosphate = 2-C-methyl-D-erythritol 2,4-cyclic diphosphate + CMP. It functions in the pathway isoprenoid biosynthesis; isopentenyl diphosphate biosynthesis via DXP pathway; isopentenyl diphosphate from 1-deoxy-D-xylulose 5-phosphate: step 2/6. It participates in isoprenoid biosynthesis; isopentenyl diphosphate biosynthesis via DXP pathway; isopentenyl diphosphate from 1-deoxy-D-xylulose 5-phosphate: step 4/6. Its function is as follows. Bifunctional enzyme that catalyzes the formation of 4-diphosphocytidyl-2-C-methyl-D-erythritol from CTP and 2-C-methyl-D-erythritol 4-phosphate (MEP) (IspD), and catalyzes the conversion of 4-diphosphocytidyl-2-C-methyl-D-erythritol 2-phosphate (CDP-ME2P) to 2-C-methyl-D-erythritol 2,4-cyclodiphosphate (ME-CPP) with a corresponding release of cytidine 5-monophosphate (CMP) (IspF). The chain is Bifunctional enzyme IspD/IspF from Bartonella bacilliformis (strain ATCC 35685 / KC583 / Herrer 020/F12,63).